We begin with the raw amino-acid sequence, 282 residues long: 3-methyl-2-oxobutanoate hydroxymethyltransferase (282 aa).

Mg(2+) is bound by residues Asp45 and Asp84. 3-methyl-2-oxobutanoate contacts are provided by residues 45–46 (DS), Asp84, and Lys114. A Mg(2+)-binding site is contributed by Glu116. The active-site Proton acceptor is the Glu183.

Belongs to the PanB family. In terms of assembly, homodecamer; pentamer of dimers. It depends on Mg(2+) as a cofactor.

The protein localises to the cytoplasm. It carries out the reaction 3-methyl-2-oxobutanoate + (6R)-5,10-methylene-5,6,7,8-tetrahydrofolate + H2O = 2-dehydropantoate + (6S)-5,6,7,8-tetrahydrofolate. It participates in cofactor biosynthesis; (R)-pantothenate biosynthesis; (R)-pantoate from 3-methyl-2-oxobutanoate: step 1/2. Its function is as follows. Catalyzes the reversible reaction in which hydroxymethyl group from 5,10-methylenetetrahydrofolate is transferred onto alpha-ketoisovalerate to form ketopantoate. This is 3-methyl-2-oxobutanoate hydroxymethyltransferase from Syntrophobacter fumaroxidans (strain DSM 10017 / MPOB).